Reading from the N-terminus, the 139-residue chain is Large ribosomal subunit protein uL13 (139 aa).

It belongs to the universal ribosomal protein uL13 family. As to quaternary structure, part of the 50S ribosomal subunit.

In terms of biological role, this protein is one of the early assembly proteins of the 50S ribosomal subunit, although it is not seen to bind rRNA by itself. It is important during the early stages of 50S assembly. This is Large ribosomal subunit protein uL13 from Methanococcoides burtonii (strain DSM 6242 / NBRC 107633 / OCM 468 / ACE-M).